The sequence spans 173 residues: MSEKVCIGKIVGVYGVKGWLKVRSFTSPPENMLRYANWELVREDGNRSSAKLRSGKPQGKGIVIALAGVDDRNLAKSYVGCQIEIESSELPALEEGEYYWRQLEGLTVFTSEGVNIGRVSHLIETGANDVLVVIGSAESIDKRERLIPYLPGQFIENIDLDKNLMVVDWDPDF.

The PRC barrel domain occupies 95-173 (EGEYYWRQLE…LMVVDWDPDF (79 aa)).

The protein belongs to the RimM family. As to quaternary structure, binds ribosomal protein uS19.

Its subcellular location is the cytoplasm. Its function is as follows. An accessory protein needed during the final step in the assembly of 30S ribosomal subunit, possibly for assembly of the head region. Essential for efficient processing of 16S rRNA. May be needed both before and after RbfA during the maturation of 16S rRNA. It has affinity for free ribosomal 30S subunits but not for 70S ribosomes. This Hahella chejuensis (strain KCTC 2396) protein is Ribosome maturation factor RimM.